The sequence spans 136 residues: Holo-[acyl-carrier-protein] synthase (136 aa).

Mg(2+) contacts are provided by D8 and E62.

It belongs to the P-Pant transferase superfamily. AcpS family. The cofactor is Mg(2+).

The protein resides in the cytoplasm. The catalysed reaction is apo-[ACP] + CoA = holo-[ACP] + adenosine 3',5'-bisphosphate + H(+). Functionally, transfers the 4'-phosphopantetheine moiety from coenzyme A to a Ser of acyl-carrier-protein. This is Holo-[acyl-carrier-protein] synthase from Polynucleobacter necessarius subsp. necessarius (strain STIR1).